Consider the following 233-residue polypeptide: MKPVYRCRVCSAYTEEPVHCGRPAEPLMTGEQRLRLSKLMTTLLRHLPHEAGLRLDPQGWVGIDELVRGIRERWRNRHLYQWVTRDHVIAVALLDPKGRFQLDLARGRIRAAYGHTVRVELGYRPLSMDELPDKLYHGTVAENLASILSEGLKPMRRLMVHMTTDYSSAVETGRRHGPNVVVLVIDPRCLAKHGIPVYRASDTIYLAPSVPPNCITGKIARNPQSARKTYLHA.

This sequence belongs to the KptA/TPT1 family.

Removes the 2'-phosphate from RNA via an intermediate in which the phosphate is ADP-ribosylated by NAD followed by a presumed transesterification to release the RNA and generate ADP-ribose 1''-2''-cyclic phosphate (APPR&gt;P). May function as an ADP-ribosylase. In Hyperthermus butylicus (strain DSM 5456 / JCM 9403 / PLM1-5), this protein is Probable RNA 2'-phosphotransferase.